We begin with the raw amino-acid sequence, 352 residues long: tRNA N6-adenosine threonylcarbamoyltransferase (352 aa).

Fe cation contacts are provided by His-115 and His-119. Substrate-binding positions include 138 to 142 (LVSGG), Asp-171, Gly-184, and Asn-276. Fe cation is bound at residue Asp-304.

Belongs to the KAE1 / TsaD family. It depends on Fe(2+) as a cofactor.

The protein localises to the cytoplasm. It carries out the reaction L-threonylcarbamoyladenylate + adenosine(37) in tRNA = N(6)-L-threonylcarbamoyladenosine(37) in tRNA + AMP + H(+). Its function is as follows. Required for the formation of a threonylcarbamoyl group on adenosine at position 37 (t(6)A37) in tRNAs that read codons beginning with adenine. Is involved in the transfer of the threonylcarbamoyl moiety of threonylcarbamoyl-AMP (TC-AMP) to the N6 group of A37, together with TsaE and TsaB. TsaD likely plays a direct catalytic role in this reaction. The polypeptide is tRNA N6-adenosine threonylcarbamoyltransferase (Xanthomonas axonopodis pv. citri (strain 306)).